An 89-amino-acid polypeptide reads, in one-letter code: Small ribosomal subunit protein uS15 (89 aa).

This sequence belongs to the universal ribosomal protein uS15 family. Part of the 30S ribosomal subunit. Forms a bridge to the 50S subunit in the 70S ribosome, contacting the 23S rRNA.

In terms of biological role, one of the primary rRNA binding proteins, it binds directly to 16S rRNA where it helps nucleate assembly of the platform of the 30S subunit by binding and bridging several RNA helices of the 16S rRNA. Its function is as follows. Forms an intersubunit bridge (bridge B4) with the 23S rRNA of the 50S subunit in the ribosome. In Synechococcus elongatus (strain ATCC 33912 / PCC 7942 / FACHB-805) (Anacystis nidulans R2), this protein is Small ribosomal subunit protein uS15.